The primary structure comprises 182 residues: Ribosome-recycling factor (182 aa).

Belongs to the RRF family.

The protein resides in the cytoplasm. In terms of biological role, responsible for the release of ribosomes from messenger RNA at the termination of protein biosynthesis. May increase the efficiency of translation by recycling ribosomes from one round of translation to another. The chain is Ribosome-recycling factor from Gloeobacter violaceus (strain ATCC 29082 / PCC 7421).